Reading from the N-terminus, the 910-residue chain is Staphylococcal nuclease domain-containing protein 1 (910 aa).

Ala-2 carries the N-acetylalanine modification. TNase-like domains lie at 18 to 166 (TVQR…MWSE), 193 to 328 (KPVN…IWRD), and 341 to 496 (KQFV…LHSK). Thr-103 carries the phosphothreonine modification. Lys-193 is subject to N6-acetyllysine. Thr-240 is modified (phosphothreonine). 2 consecutive short sequence motifs (nuclear localization signal) follow at residues 321–325 (RRLRI) and 388–392 (KKLRP). At Ser-426 the chain carries Phosphoserine. Lys-513 participates in a covalent cross-link: Glycyl lysine isopeptide (Lys-Gly) (interchain with G-Cter in SUMO2). Residues 525-660 (GRSEAVVEYV…KQKKEKVWAH (136 aa)) enclose the TNase-like 4 domain. Lys-641 bears the N6-acetyllysine mark. Ser-645 is subject to Phosphoserine. Residues 729-787 (APRRGEFCIAKFVDGEWYRARVEKVESPAKVHVFYIDYGNREILPSTRLGTLPPAFSTR) form the Tudor domain. Phosphothreonine is present on Thr-779. 2 positions are modified to phosphoserine: Ser-785 and Ser-909.

Forms a ternary complex with STAT6 and POLR2A. Associates with the RNA-induced silencing complex (RISC). Interacts with the RISC components AGO2, FMR1 and TNRC6A. Interacts with GTF2E1 and GTF2E2. Interacts with PIM1. Interacts with STAT5. Interacts with SYT11 (via C2 2 domain); the interaction with SYT11 is direct. Post-translationally, phosphorylated by PIM1 in vitro. In terms of tissue distribution, in lactating cows highly expressed in mammary epithelial cells.

It localises to the cytoplasm. The protein localises to the nucleus. The protein resides in the melanosome. It carries out the reaction Endonucleolytic cleavage to nucleoside 3'-phosphates and 3'-phosphooligonucleotide end-products.. Its function is as follows. Endonuclease that mediates miRNA decay of both protein-free and AGO2-loaded miRNAs. As part of its function in miRNA decay, regulates mRNAs involved in G1-to-S phase transition. Functions as a bridging factor between STAT6 and the basal transcription factor. Plays a role in PIM1 regulation of MYB activity. Functions as a transcriptional coactivator for STAT5. The chain is Staphylococcal nuclease domain-containing protein 1 (SND1) from Bos taurus (Bovine).